Here is a 430-residue protein sequence, read N- to C-terminus: Adenylosuccinate synthetase (430 aa).

GTP is bound by residues 12–18 (GDEGKGK) and 40–42 (GHT). Catalysis depends on aspartate 13, which acts as the Proton acceptor. Residues aspartate 13 and glycine 40 each coordinate Mg(2+). Residues 13 to 16 (DEGK), 38 to 41 (NAGH), threonine 128, arginine 142, glutamine 223, threonine 238, and arginine 302 each bind IMP. Histidine 41 functions as the Proton donor in the catalytic mechanism. A substrate-binding site is contributed by 298-304 (TTTGRPR). GTP contacts are provided by residues arginine 304, 330–332 (SID), and 412–414 (SVG).

The protein belongs to the adenylosuccinate synthetase family. In terms of assembly, homodimer. The cofactor is Mg(2+).

The protein localises to the cytoplasm. The enzyme catalyses IMP + L-aspartate + GTP = N(6)-(1,2-dicarboxyethyl)-AMP + GDP + phosphate + 2 H(+). It participates in purine metabolism; AMP biosynthesis via de novo pathway; AMP from IMP: step 1/2. Plays an important role in the de novo pathway of purine nucleotide biosynthesis. Catalyzes the first committed step in the biosynthesis of AMP from IMP. In Streptococcus agalactiae serotype III (strain NEM316), this protein is Adenylosuccinate synthetase.